A 496-amino-acid polypeptide reads, in one-letter code: Gasdermin-E (496 aa).

The interval 1–56 (MFAKATRNFLREVDADGDLIAVSNLNDSDKLQLLSLVTKKKRFWCWQRPKYQFLSL) is membrane targeting domain. Residue Cys45 is modified to S-(2-succinyl)cysteine. Residue Lys120 forms a Glycyl lysine isopeptide (Lys-Gly) (interchain with G-Cter in ubiquitin) linkage. S-(2-succinyl)cysteine is present on residues Cys156, Cys168, and Cys180. Lys189 participates in a covalent cross-link: Glycyl lysine isopeptide (Lys-Gly) (interchain with G-Cter in ubiquitin). An S-(2-succinyl)cysteine mark is found at Cys235, Cys371, Cys408, Cys417, and Cys489.

This sequence belongs to the gasdermin family. As to quaternary structure, homooligomer; homooligomeric ring-shaped pore complex containing 27-28 subunits when inserted in the membrane. Cleavage at Asp-270 by CASP3 (mature and uncleaved precursor forms) or granzyme B (GZMB) relieves autoinhibition and is sufficient to initiate pyroptosis. In terms of processing, succination by the Krebs cycle intermediate fumarate, which leads to S-(2-succinyl)cysteine residues, inhibits processing by caspases, and ability to initiate pyroptosis. Succination modification is catalyzed by a non-enzymatic reaction caused by an accumulation of fumarate. Post-translationally, ubiquitinated at Lys-120 and Lys-189 via 'Lys-48'-linked polyubiquitin chains, leading to proteasomal degradation. Deubiquitinated by USP48, leading to increased stability. Palmitoylated. As to expression, expressed in cochlea. Low level of expression in heart, brain, placenta, lung, liver, skeletal muscle, kidney and pancreas, with highest expression in placenta.

Its subcellular location is the cell membrane. It localises to the cytoplasm. The protein localises to the cytosol. The full-length protein before cleavage is inactive: intramolecular interactions between N- and C-terminal domains mediate autoinhibition in the absence of activation signal. The intrinsic pyroptosis-inducing activity is carried by the released N-terminal moiety (Gasdermin-E, N-terminal) following cleavage by CASP3 or granzyme B (GZMB). Activated by NLRP1 in the absence of GSDMD expression: NLRP1 cleaves and activates CASP8, promoting downstream activation of CASP3 and subsequent activation of GSDME. With respect to regulation, (Microbial infection) Activated upon human coronavirus SARS-CoV-2 infection, leading to lung epithelial cell death. Activation takes place in response to (1) activation of NLRP1 and (2) inactivation of GSDMD following NLRP1 and GSDMD cleavage by the SARS-CoV-2 3C-like proteinase nsp5. Precursor of a pore-forming protein that converts non-inflammatory apoptosis to pyroptosis. This form constitutes the precursor of the pore-forming protein: upon cleavage, the released N-terminal moiety (Gasdermin-E, N-terminal) binds to membranes and forms pores, triggering pyroptosis. Functionally, pore-forming protein produced by cleavage by CASP3 or granzyme B (GZMB), which converts non-inflammatory apoptosis to pyroptosis or promotes granzyme-mediated pyroptosis, respectively. After cleavage, moves to the plasma membrane, homooligomerizes within the membrane and forms pores of 10-15 nanometers (nm) of inner diameter, allowing the release of mature interleukins (IL1B and IL16) and triggering pyroptosis. Binds to inner leaflet lipids, bisphosphorylated phosphatidylinositols, such as phosphatidylinositol (4,5)-bisphosphate. Cleavage by CASP3 switches CASP3-mediated apoptosis induced by TNF or danger signals, such as chemotherapy drugs, to pyroptosis. Mediates secondary necrosis downstream of the mitochondrial apoptotic pathway and CASP3 activation as well as in response to viral agents. Exhibits bactericidal activity. Cleavage by GZMB promotes tumor suppressor activity by triggering robust anti-tumor immunity. Suppresses tumors by mediating granzyme-mediated pyroptosis in target cells of natural killer (NK) cells: cleavage by granzyme B (GZMB), delivered to target cells from NK-cells, triggers pyroptosis of tumor cells and tumor suppression. May play a role in the p53/TP53-regulated cellular response to DNA damage. In terms of biological role, (Microbial infection) Pore-forming protein, which promotes maternal placental pyroptosis in response to Zika virus infection, contributing to adverse fetal outcomes. The sequence is that of Gasdermin-E from Homo sapiens (Human).